The following is a 132-amino-acid chain: ATP synthase epsilon chain (132 aa).

This sequence belongs to the ATPase epsilon chain family. As to quaternary structure, F-type ATPases have 2 components, CF(1) - the catalytic core - and CF(0) - the membrane proton channel. CF(1) has five subunits: alpha(3), beta(3), gamma(1), delta(1), epsilon(1). CF(0) has three main subunits: a, b and c.

Its subcellular location is the cell inner membrane. Functionally, produces ATP from ADP in the presence of a proton gradient across the membrane. The chain is ATP synthase epsilon chain from Anaeromyxobacter dehalogenans (strain 2CP-1 / ATCC BAA-258).